The following is a 126-amino-acid chain: Glycine cleavage system H protein (126 aa).

A Lipoyl-binding domain is found at 23–104 (TLTVGITDHA…PYDNWLFKIK (82 aa)). Position 64 is an N6-lipoyllysine (Lys64).

The protein belongs to the GcvH family. As to quaternary structure, the glycine cleavage system is composed of four proteins: P, T, L and H. It depends on (R)-lipoate as a cofactor.

In terms of biological role, the glycine cleavage system catalyzes the degradation of glycine. The H protein shuttles the methylamine group of glycine from the P protein to the T protein. The protein is Glycine cleavage system H protein of Paraburkholderia phymatum (strain DSM 17167 / CIP 108236 / LMG 21445 / STM815) (Burkholderia phymatum).